A 327-amino-acid polypeptide reads, in one-letter code: MCLQQLVISWVSLVWLASPLLAIWELEKNVYVVELDWHPDTPGEKVVLTCDTPEEDGITWTSEQSSEVLGSGKTLTILVKEFEDAGHYTCRRGGEVLSQMLLLLHKNEDGIWSTDILKKKEPENKNLVTCEAKNYSGRFTCWWLTAISTDVNFSVKSHRGSSDPQGVTCGEATLSAERVKIEQREYKKYSVQCQEDNACPTAEETLPITVVVDAVHKLKYENYISSFFIRDIIKPDPPKNLKMKPSKTPQQVEVTWEYPDSWSTPHSYFSLTFSVQVQGKKKKRSNTLHVDKTSVTVTCQKGAKVSVQARDRYYNSSWSEWATMSCP.

An N-terminal signal peptide occupies residues 1-22; it reads MCLQQLVISWVSLVWLASPLLA. The Ig-like C2-type domain occupies 23–106; that stretch reads IWELEKNVYV…LSQMLLLLHK (84 aa). A disulfide bond links cysteine 50 and cysteine 90. N-linked (GlcNAc...) asparagine glycans are attached at residues asparagine 134 and asparagine 152. The 91-residue stretch at 237-327 folds into the Fibronectin type-III domain; it reads PPKNLKMKPS…WSEWATMSCP (91 aa).

The protein belongs to the IL-12B family. Heterodimer with IL12A; disulfide-linked. The heterodimer is known as interleukin IL-12. Heterodimer with IL23A; disulfide-linked. The heterodimer is known as interleukin IL-23. Also secreted as a monomer. Interacts with NBR1; this interaction promotes IL-12 secretion.

Its subcellular location is the secreted. Its function is as follows. Cytokine that can act as a growth factor for activated T and NK cells, enhance the lytic activity of NK/lymphokine-activated killer cells, and stimulate the production of IFN-gamma by resting PBMC. Associates with IL23A to form the IL-23 interleukin, a heterodimeric cytokine which functions in innate and adaptive immunity. IL-23 may constitute with IL-17 an acute response to infection in peripheral tissues. IL-23 binds to a heterodimeric receptor complex composed of IL12RB1 and IL23R, activates the Jak-Stat signaling cascade, stimulates memory rather than naive T-cells and promotes production of pro-inflammatory cytokines. IL-23 induces autoimmune inflammation and thus may be responsible for autoimmune inflammatory diseases and may be important for tumorigenesis. The polypeptide is Interleukin-12 subunit beta (IL12B) (Marmota monax (Woodchuck)).